A 122-amino-acid chain; its full sequence is Large ribosomal subunit protein uL14 (122 aa).

Belongs to the universal ribosomal protein uL14 family. As to quaternary structure, part of the 50S ribosomal subunit. Forms a cluster with proteins L3 and L19. In the 70S ribosome, L14 and L19 interact and together make contacts with the 16S rRNA in bridges B5 and B8.

Functionally, binds to 23S rRNA. Forms part of two intersubunit bridges in the 70S ribosome. The protein is Large ribosomal subunit protein uL14 of Nitrosomonas eutropha (strain DSM 101675 / C91 / Nm57).